The sequence spans 445 residues: RING finger and transmembrane domain-containing protein 2 (445 aa).

Residues 1–183 (MWLLAAHQVL…LLAKLCFQHK (183 aa)) lie on the Extracellular side of the membrane. Residues 12-41 (KMQRRHSSNTDNIPPERSRSQALSPEASVD) form a disordered region. Residues 184–203 (LGIAVCIGMASTFAYANSTL) form a helical membrane-spanning segment. At 204–215 (REQVSLKEKRSV) the chain is on the cytoplasmic side. A helical transmembrane segment spans residues 216 to 236 (LVILWILAFLAGNTMYVLYTF). Over 237-256 (SSQQLYSSLIFLKPNLETLD) the chain is Extracellular. A helical membrane pass occupies residues 257–277 (FFDLLWIVGIADFVLKYITIA). Residues 278-330 (LKCLIVALPKIILAVKSKGKFYLVIEELSQLFRSLVPIQLWYKYIMGDDSSNS) are Cytoplasmic-facing. Residues 331–351 (YFLGGVLIVLYSLCKSFDICG) traverse the membrane as a helical segment. Residues 352–445 (RVGGLRKALK…GATSAHLQVY (94 aa)) lie on the Extracellular side of the membrane. The RING-type zinc-finger motif lies at 385–423 (CAICQAEFRDPMILLCQHVFCEECLCLWLDRERTCPLCR).

It is found in the membrane. Its function is as follows. E3 ubiquitin-protein ligase that negatively regulates IL3-dependent cellular responses through IL3RA ubiquitination and degradation by the proteasome, having an anti-inflammatory effect. This chain is RING finger and transmembrane domain-containing protein 2 (Rnft2), found in Mus musculus (Mouse).